Here is a 438-residue protein sequence, read N- to C-terminus: Aspartate--tRNA(Asp/Asn) ligase (438 aa).

Position 176 (glutamate 176) interacts with L-aspartate. The tract at residues 198–201 (QLYK) is aspartate. Arginine 220 lines the L-aspartate pocket. Residues 220-222 (RAE), 228-230 (RHL), and glutamate 361 each bind ATP. Glutamate 361 and serine 364 together coordinate Mg(2+). 2 residues coordinate L-aspartate: serine 364 and arginine 368. Residue 409–412 (GADR) participates in ATP binding.

The protein belongs to the class-II aminoacyl-tRNA synthetase family. Type 2 subfamily. Homodimer. It depends on Mg(2+) as a cofactor.

The protein localises to the cytoplasm. It catalyses the reaction tRNA(Asx) + L-aspartate + ATP = L-aspartyl-tRNA(Asx) + AMP + diphosphate. Functionally, aspartyl-tRNA synthetase with relaxed tRNA specificity since it is able to aspartylate not only its cognate tRNA(Asp) but also tRNA(Asn). Reaction proceeds in two steps: L-aspartate is first activated by ATP to form Asp-AMP and then transferred to the acceptor end of tRNA(Asp/Asn). The polypeptide is Aspartate--tRNA(Asp/Asn) ligase (Methanococcus maripaludis (strain DSM 14266 / JCM 13030 / NBRC 101832 / S2 / LL)).